Consider the following 191-residue polypeptide: NF-kappa-B inhibitor-interacting Ras-like protein 2 (191 aa).

Positions 1–191 (MGKSCKVVVC…KNKGSGSLDG (191 aa)) are small GTPase-like. 11–18 (GQASVGKT) lines the GTP pocket. The Effector region signature appears at 35–43 (MIETQEDIY). Residues 61-65 (DTRGL) and 120-123 (NKCD) each bind GTP. Positions 169 to 191 (TQPQSKSAFPLSRKNKGSGSLDG) are disordered.

Belongs to the small GTPase superfamily. Ras family. KappaB-Ras subfamily. As to quaternary structure, interacts with both NF-kappa-B inhibitor alpha (NFKBIA) and beta (NFKBIB) in vitro. However, it probably only interacts with NFKBIB in vivo. Interacts with GFOD1.

It localises to the cytoplasm. Functionally, atypical Ras-like protein that acts as a potent regulator of NF-kappa-B activity by preventing the degradation of NF-kappa-B inhibitor beta (NFKBIB) by most signals, explaining why NFKBIB is more resistant to degradation. May act by blocking phosphorylation of NFKBIB and nuclear localization of p65/RELA NF-kappa-B subunit. It is unclear whether it acts as a GTPase. Both GTP- and GDP-bound forms block phosphorylation of NFKBIB. This chain is NF-kappa-B inhibitor-interacting Ras-like protein 2 (Nkiras2), found in Mus musculus (Mouse).